Here is a 303-residue protein sequence, read N- to C-terminus: Ribonuclease HIII (303 aa).

In terms of domain architecture, RNase H type-2 spans 85–302; it reads CSLIGSDEVG…TKKAYQLLKK (218 aa). Positions 91, 92, and 196 each coordinate a divalent metal cation.

Belongs to the RNase HII family. RnhC subfamily. The cofactor is Mn(2+). Mg(2+) is required as a cofactor.

Its subcellular location is the cytoplasm. It carries out the reaction Endonucleolytic cleavage to 5'-phosphomonoester.. In terms of biological role, endonuclease that specifically degrades the RNA of RNA-DNA hybrids. The protein is Ribonuclease HIII of Streptococcus mutans serotype c (strain ATCC 700610 / UA159).